The chain runs to 314 residues: tRNA dimethylallyltransferase (314 aa).

10–17 provides a ligand contact to ATP; sequence GPTGVGKT. 12–17 contributes to the substrate binding site; the sequence is TGVGKT. The tract at residues 35-38 is interaction with substrate tRNA; the sequence is DSMQ.

This sequence belongs to the IPP transferase family. As to quaternary structure, monomer. The cofactor is Mg(2+).

The enzyme catalyses adenosine(37) in tRNA + dimethylallyl diphosphate = N(6)-dimethylallyladenosine(37) in tRNA + diphosphate. In terms of biological role, catalyzes the transfer of a dimethylallyl group onto the adenine at position 37 in tRNAs that read codons beginning with uridine, leading to the formation of N6-(dimethylallyl)adenosine (i(6)A). The polypeptide is tRNA dimethylallyltransferase (Finegoldia magna (strain ATCC 29328 / DSM 20472 / WAL 2508) (Peptostreptococcus magnus)).